The sequence spans 1307 residues: Rab3 GTPase-activating protein regulatory subunit (1307 aa).

It belongs to the Rab3-GAP regulatory subunit family. In terms of assembly, the Rab3 GTPase-activating complex is a heterodimer composed of rbg-1 and rbg-2.

It localises to the cytoplasm. Its function is as follows. Probable regulatory subunit of a GTPase activating protein that has specificity for Rab3 subfamily. Rab3 proteins are involved in regulated exocytosis of neurotransmitters and hormones. Rab3 GTPase-activating complex specifically converts active Rab3-GTP to the inactive form Rab3-GDP. This Caenorhabditis elegans protein is Rab3 GTPase-activating protein regulatory subunit (rbg-2).